The primary structure comprises 311 residues: Mycinamicin-resistance protein MyrB (311 aa).

Asn-27, Leu-29, Gly-54, Glu-75, and Asp-98 together coordinate S-adenosyl-L-methionine. Positions Pro-272 to Ala-311 are disordered. A compositionally biased stretch (low complexity) spans Pro-293–Pro-302.

It belongs to the class I-like SAM-binding methyltransferase superfamily. rRNA adenine N(6)-methyltransferase family.

Its function is as follows. Confers resistance to macrolide, lincosamide and streptogramin B antibiotics. This is Mycinamicin-resistance protein MyrB (myrB) from Micromonospora griseorubida.